Consider the following 693-residue polypeptide: Transforming growth factor beta activator LRRC33 (693 aa).

The first 19 residues, 1–19 (MEFPPLWLCLGFHFLIVEW), serve as a signal peptide directing secretion. At 20–651 (RSGPGTATAA…CKWEQVDTGL (632 aa)) the chain is on the extracellular side. The region spanning 29–56 (ASQGGCKVVDGVADCRGLNLASVPSSLP) is the LRRNT domain. 10 LRR repeats span residues 58–79 (HSRM…SLQA), 82–103 (RLEN…AFRE), 106–127 (HLRN…SAAA), 133–155 (GLRR…MLQN), 158–179 (SLEV…IFEG), 182–203 (HLVE…AFDG), 206–227 (ELRR…SLTQ), 228–239 (LRFLNVSYNILE), 251–272 (ELEI…PQCG), and 273–294 (KLHT…YNTS). N-linked (GlcNAc...) asparagine glycosylation is found at N74 and N85. An N-linked (GlcNAc...) asparagine glycan is attached at N155. N-linked (GlcNAc...) asparagine glycosylation occurs at N232. Residues N292, N309, and N312 are each glycosylated (N-linked (GlcNAc...) asparagine). LRR repeat units follow at residues 329-350 (ALRF…FLKK), 353-374 (SLSH…EHEP), 377-398 (ALTE…PGLT), 403-424 (NLRV…LFDN), 427-448 (SITT…VPVD), 463-484 (SLRS…PFQG), 486-507 (SLTH…SPLW), 512-533 (TLQV…MDFS), 537-558 (NLRA…KGSL), 559-580 (ALRT…VVSE), and 585-605 (GLQT…EGWG). Residues N408 and N424 are each glycosylated (N-linked (GlcNAc...) asparagine). N500 is a glycosylation site (N-linked (GlcNAc...) asparagine). The LRRCT domain occupies 606 to 644 (ALQQHFKTVADLSMVTCNLSSKIVRVVELPEGLPQGCKW). Residue N623 is glycosylated (N-linked (GlcNAc...) asparagine). A helical membrane pass occupies residues 652 to 672 (FYLVLILPSCLTLLVACTVVF). At 673–693 (LTFKKPLLQVIKSRCHWSSIY) the chain is on the cytoplasmic side.

The protein belongs to the LRRC32/LRRC33 family. Interacts with TGFB1; associates via disulfide bonds with the Latency-associated peptide chain (LAP) regulatory chain of TGFB1, leading to regulate activation of TGF-beta-1. Interacts (via LRR repeats) with TLR2, TLR3, TLR4, TLR9 and probably other Toll-like receptors. Interacts with CYBB/NOX2; the interaction is direct. N-glycosylated. As to expression, mainly expressed in cells of hematopoietic origin, such as in immune organs such as lymph nodes, thymus and spleen. Among leukocytes, expressed at higher level in myeloid cell such as macrophages, neutrophils and dendritic cells. Highly expressed in central nervous system-resident macrophages, including microglia and perivascular macrophages.

Its subcellular location is the cell membrane. The protein resides in the endoplasmic reticulum membrane. In terms of biological role, key regulator of transforming growth factor beta-1 (TGFB1) specifically required for microglia function in the nervous system. Required for activation of latent TGF-beta-1 in macrophages and microglia: associates specifically via disulfide bonds with the Latency-associated peptide (LAP), which is the regulatory chain of TGFB1, and regulates integrin-dependent activation of TGF-beta-1. TGF-beta-1 activation mediated by LRRC33/NRROS is highly localized: there is little spreading of TGF-beta-1 activated from one microglial cell to neighboring microglia, suggesting the existence of localized and selective activation of TGF-beta-1 by LRRC33/NRROS. Indirectly plays a role in Toll-like receptor (TLR) signaling: ability to inhibit TLR-mediated NF-kappa-B activation and cytokine production is probably a consequence of its role in TGF-beta-1 signaling. This chain is Transforming growth factor beta activator LRRC33, found in Mus musculus (Mouse).